The following is a 72-amino-acid chain: Conotoxin VnMKLT2-021 (72 aa).

The signal sequence occupies residues 1 to 22 (MKLTCVLIVAVLFLTACQLTTA). Positions 23 to 45 (ASYARSERQHPDLGSSDQNSKLT) are excised as a propeptide. 3 cysteine pairs are disulfide-bonded: Cys-48–Cys-62, Cys-55–Cys-66, and Cys-61–Cys-71.

This sequence belongs to the conotoxin O1 superfamily. Expressed by the venom duct.

Its subcellular location is the secreted. This is Conotoxin VnMKLT2-021 from Conus ventricosus (Mediterranean cone).